The following is a 208-amino-acid chain: High frequency lysogenization protein HflD homolog (208 aa).

The protein belongs to the HflD family.

The protein localises to the cytoplasm. It is found in the cell inner membrane. The chain is High frequency lysogenization protein HflD homolog from Yersinia enterocolitica serotype O:8 / biotype 1B (strain NCTC 13174 / 8081).